The following is a 487-amino-acid chain: DNA ligase (487 aa).

The active-site N6-AMP-lysine intermediate is the Lys159. 3 residues coordinate ATP: Arg164, Arg182, and Glu217. Glu217 is an a divalent metal cation binding site. Residues 229-237 (EGLDFLFDA) are interaction with the sliding clamp. Position 344 (Glu344) interacts with a divalent metal cation. ATP-binding residues include Arg359 and Lys365.

The protein belongs to the ATP-dependent DNA ligase family. Interacts with the sliding clamp. The cofactor is a divalent metal cation.

The enzyme catalyses ATP + (deoxyribonucleotide)n-3'-hydroxyl + 5'-phospho-(deoxyribonucleotide)m = (deoxyribonucleotide)n+m + AMP + diphosphate.. In terms of biological role, DNA ligase, which is expressed in the early stage of lytic development, has been implicated in T4 DNA synthesis and genetic recombination. It may also play a role in T4 DNA repair. The chain is DNA ligase (30) from Escherichia coli (Bacteriophage T6).